Consider the following 601-residue polypeptide: Cdc42-interacting protein 4 (601 aa).

A required for translocation to the plasma membrane in response to insulin, podosome formation and interaction with AKAP9 and microtubules region spans residues 1–117 (MDWGTELWDQ…EMKQERKMHF (117 aa)). An F-BAR domain is found at 1–264 (MDWGTELWDQ…AANAVDPKND (264 aa)). Positions 67–259 (FSQQQSFVQI…EGMKVAANAV (193 aa)) form a coiled coil. Disordered regions lie at residues 280 to 358 (GDVE…GRDP), 390 to 420 (DFSHLPPEQQRKRLQQQLEERSRELQKEVDQ), and 478 to 543 (NRGD…SPIG). Residues 289-302 (QPMNRAPSDSSLGT) show a composition bias toward polar residues. An interaction with CDC42 region spans residues 293–537 (RAPSDSSLGT…TEFDEDFEEE (245 aa)). Positions 293–601 (RAPSDSSLGT…PTSYLRVTLN (309 aa)) are interaction with PDE6G. A phosphoserine mark is found at Ser296, Ser298, and Ser299. A compositionally biased stretch (basic residues) spans 314 to 329 (GRSRTKRWPFGKKNKP). Phosphoserine is present on Ser335. Residues 336–346 (PLGGPVPSALP) are compositionally biased toward low complexity. At Ser351 the chain carries Phosphoserine. The stretch at 388–481 (TEDFSHLPPE…ESRVLSNRGD (94 aa)) forms a coiled coil. The REM-1 domain occupies 393–470 (HLPPEQQRKR…VQKYEAWLAE (78 aa)). The span at 407-420 (LEERSRELQKEVDQ) shows a compositional bias: basic and acidic residues. The segment at 471-601 (AESRVLSNRG…PTSYLRVTLN (131 aa)) is required for interaction with FASLG and localization to lysosomes. At Ser482 the chain carries Phosphoserine. Residues 487 to 541 (ARPPDPPTSAPPDSSSNSASQDTKESSEEPPSEESQDTPIYTEFDEDFEEEPTSP) are interaction with DNM2 and WASL. Residues 497–506 (PPDSSSNSAS) show a composition bias toward low complexity. The span at 529-538 (EFDEDFEEEP) shows a compositional bias: acidic residues. The segment at 529 to 601 (EFDEDFEEEP…PTSYLRVTLN (73 aa)) is interaction with DNM1 and WASL. The interval 538 to 601 (PTSPIGHCVA…PTSYLRVTLN (64 aa)) is required for podosome formation. One can recognise an SH3 domain in the interval 540-601 (SPIGHCVAIY…PTSYLRVTLN (62 aa)). Residues 544–601 (HCVAIYHFEGSSEGTISMAEGEDLSLMEEDKGDGWTRVRRKEGGEGYVPTSYLRVTLN) are interaction with WAS. The segment at 546–601 (VAIYHFEGSSEGTISMAEGEDLSLMEEDKGDGWTRVRRKEGGEGYVPTSYLRVTLN) is interaction with ARHGAP17, DAAM1, DIAPH1 and DIAPH2.

It belongs to the FNBP1 family. As to quaternary structure, homodimerizes, the dimers can polymerize end-to-end to form filamentous structures. Interacts with AKAP9, ARHGAP17, DAAM1, DIAPH1, DIAPH2, DNM1, FASLG/FASL, GAPVD1, LYN, microtubules, PDE6G, SRC and WAS/WASP. Interacts with the ligand binding domain of the thyroid receptor (TR) in the presence of thyroid hormone. May interact with CTNNB1 and HD/HTT. Interacts specifically with GTP-bound CDC42 and RHOQ. Interacts with DNM2 and WASL. Post-translationally, tyrosine phosphorylated. Also phosphorylated by PKA.

Its subcellular location is the cytoplasm. It localises to the cytoskeleton. The protein localises to the cell cortex. The protein resides in the lysosome. It is found in the golgi apparatus. Its subcellular location is the cell membrane. It localises to the cell projection. The protein localises to the phagocytic cup. Its function is as follows. Required to coordinate membrane tubulation with reorganization of the actin cytoskeleton during endocytosis. Also acts as a link between CDC42 signaling and regulation of the actin cytoskeleton. Binds to lipids such as phosphatidylinositol 4,5-bisphosphate and phosphatidylserine and promotes membrane invagination and the formation of tubules. Also enhances actin polymerization in the vicinity of membrane tubules by recruiting WASL/N-WASP which in turn activates the Arp2/3 complex. Actin polymerization and dynamin may promote the fission of membrane tubules to form endocytic vesicles. Required for the formation of podosomes, actin-rich adhesion structures specific to monocyte-derived cells. Required for translocation of GLUT4 to the plasma membrane in response to insulin signaling. May be required for the lysosomal retention of FASLG/FASL. In Pongo abelii (Sumatran orangutan), this protein is Cdc42-interacting protein 4 (TRIP10).